The primary structure comprises 448 residues: Ribosomal protein uS12 methylthiotransferase RimO (448 aa).

The MTTase N-terminal domain maps to 16–126 (PRISFVSLGC…VVAAVHEAVP (111 aa)). [4Fe-4S] cluster is bound by residues Cys25, Cys61, Cys90, Cys157, Cys161, and Cys164. In terms of domain architecture, Radical SAM core spans 143-380 (LTPRHYAYLK…MEAQAGVSLK (238 aa)). Positions 383 to 448 (RAKVGKRLQV…DAYDLHGIAV (66 aa)) constitute a TRAM domain.

Belongs to the methylthiotransferase family. RimO subfamily. [4Fe-4S] cluster serves as cofactor.

The protein resides in the cytoplasm. It carries out the reaction L-aspartate(89)-[ribosomal protein uS12]-hydrogen + (sulfur carrier)-SH + AH2 + 2 S-adenosyl-L-methionine = 3-methylsulfanyl-L-aspartate(89)-[ribosomal protein uS12]-hydrogen + (sulfur carrier)-H + 5'-deoxyadenosine + L-methionine + A + S-adenosyl-L-homocysteine + 2 H(+). Catalyzes the methylthiolation of an aspartic acid residue of ribosomal protein uS12. The polypeptide is Ribosomal protein uS12 methylthiotransferase RimO (Methylorubrum populi (strain ATCC BAA-705 / NCIMB 13946 / BJ001) (Methylobacterium populi)).